We begin with the raw amino-acid sequence, 193 residues long: Cysteine and glycine-rich protein 1 (193 aa).

Residues 10-61 (CGVCQKTVYFAEEVQCEGSSFHKSCFLCLVCKKNLDSTTVAVHGEEIYCKSC) form the LIM zinc-binding 1 domain. Residues 64 to 69 (KKYGPK) carry the Nuclear localization signal motif. Residue Ser-81 is modified to Phosphoserine. N6-acetyllysine is present on residues Lys-84, Lys-112, Lys-131, Lys-137, and Lys-161. The 52-residue stretch at 119–170 (CPRCSQAVYAAEKVIGAGKSWHKSCFRCAKCGKGLESTTLADKDGEIYCKGC) folds into the LIM zinc-binding 2 domain. A Phosphoserine modification is found at Ser-192.

As to quaternary structure, interacts with ASCC1; ASCC2 and TRIP4.

The protein localises to the nucleus. Could play a role in neuronal development. The chain is Cysteine and glycine-rich protein 1 (CSRP1) from Bos taurus (Bovine).